The primary structure comprises 456 residues: Bifunctional protein GlmU (456 aa).

The tract at residues 1–229 (MYKSAVILAA…PDEIKGVNSR (229 aa)) is pyrophosphorylase. Residues 8 to 11 (LAAG), Lys22, Gln73, and 78 to 79 (GT) each bind UDP-N-acetyl-alpha-D-glucosamine. Residue Asp103 coordinates Mg(2+). Gly140, Glu155, Asn170, and Asn227 together coordinate UDP-N-acetyl-alpha-D-glucosamine. Position 227 (Asn227) interacts with Mg(2+). Positions 230 to 250 (GQLAEAEEILRLRINERHMEN) are linker. Positions 251-456 (GVTLIDPKNT…GWVAKKGLKK (206 aa)) are N-acetyltransferase. Residues Arg332 and Lys350 each contribute to the UDP-N-acetyl-alpha-D-glucosamine site. His362 serves as the catalytic Proton acceptor. 2 residues coordinate UDP-N-acetyl-alpha-D-glucosamine: Tyr365 and Asn376. Residues 385-386 (NY), Ala422, and Arg439 contribute to the acetyl-CoA site.

This sequence in the N-terminal section; belongs to the N-acetylglucosamine-1-phosphate uridyltransferase family. It in the C-terminal section; belongs to the transferase hexapeptide repeat family. Homotrimer. Mg(2+) serves as cofactor.

The protein localises to the cytoplasm. It catalyses the reaction alpha-D-glucosamine 1-phosphate + acetyl-CoA = N-acetyl-alpha-D-glucosamine 1-phosphate + CoA + H(+). It carries out the reaction N-acetyl-alpha-D-glucosamine 1-phosphate + UTP + H(+) = UDP-N-acetyl-alpha-D-glucosamine + diphosphate. It functions in the pathway nucleotide-sugar biosynthesis; UDP-N-acetyl-alpha-D-glucosamine biosynthesis; N-acetyl-alpha-D-glucosamine 1-phosphate from alpha-D-glucosamine 6-phosphate (route II): step 2/2. The protein operates within nucleotide-sugar biosynthesis; UDP-N-acetyl-alpha-D-glucosamine biosynthesis; UDP-N-acetyl-alpha-D-glucosamine from N-acetyl-alpha-D-glucosamine 1-phosphate: step 1/1. Its pathway is bacterial outer membrane biogenesis; LPS lipid A biosynthesis. Catalyzes the last two sequential reactions in the de novo biosynthetic pathway for UDP-N-acetylglucosamine (UDP-GlcNAc). The C-terminal domain catalyzes the transfer of acetyl group from acetyl coenzyme A to glucosamine-1-phosphate (GlcN-1-P) to produce N-acetylglucosamine-1-phosphate (GlcNAc-1-P), which is converted into UDP-GlcNAc by the transfer of uridine 5-monophosphate (from uridine 5-triphosphate), a reaction catalyzed by the N-terminal domain. This chain is Bifunctional protein GlmU, found in Clostridium novyi (strain NT).